A 427-amino-acid chain; its full sequence is Histidinol dehydrogenase (427 aa).

The substrate site is built by Ser-232, Gln-254, and His-257. 2 residues coordinate Zn(2+): Gln-254 and His-257. Residues Glu-322 and His-323 each act as proton acceptor in the active site. Positions 323, 356, 410, and 415 each coordinate substrate. Asp-356 contacts Zn(2+). Position 415 (His-415) interacts with Zn(2+).

Belongs to the histidinol dehydrogenase family. Zn(2+) serves as cofactor.

It carries out the reaction L-histidinol + 2 NAD(+) + H2O = L-histidine + 2 NADH + 3 H(+). Its pathway is amino-acid biosynthesis; L-histidine biosynthesis; L-histidine from 5-phospho-alpha-D-ribose 1-diphosphate: step 9/9. Functionally, catalyzes the sequential NAD-dependent oxidations of L-histidinol to L-histidinaldehyde and then to L-histidine. The polypeptide is Histidinol dehydrogenase (Listeria monocytogenes serovar 1/2a (strain ATCC BAA-679 / EGD-e)).